We begin with the raw amino-acid sequence, 488 residues long: Cruciferin (488 aa).

An N-terminal signal peptide occupies residues 1–23 (MARLSSLLSFSLALLTFLHGSTA). Disulfide bonds link Cys30/Cys63 and Cys105/Cys305. Cupin type-1 domains are found at residues 35–262 (LNAL…RTAQ) and 311–460 (DNLD…EEAR). A disordered region spans residues 116-163 (QPSGGSPFGEGQGQGQQGQGQGHQGQGQGQQGQQGQQGQQSQGQGFRD). The span at 121–147 (SPFGEGQGQGQQGQGQGHQGQGQGQQG) shows a compositional bias: gly residues. Residues 148-160 (QQGQQGQQSQGQG) are compositionally biased toward low complexity.

The protein belongs to the 11S seed storage protein (globulins) family. In terms of assembly, hexamer; each subunit is composed of an acidic and a basic chain derived from a single precursor and linked by a disulfide bond.

It is found in the rough endoplasmic reticulum. Its function is as follows. This is a seed storage protein. This is Cruciferin (CRUA) from Brassica napus (Rape).